A 140-amino-acid polypeptide reads, in one-letter code: Large ribosomal subunit protein bL17 (140 aa).

It belongs to the bacterial ribosomal protein bL17 family. In terms of assembly, part of the 50S ribosomal subunit. Contacts protein L32.

The polypeptide is Large ribosomal subunit protein bL17 (Rhizobium johnstonii (strain DSM 114642 / LMG 32736 / 3841) (Rhizobium leguminosarum bv. viciae)).